The sequence spans 371 residues: tRNA-specific 2-thiouridylase MnmA (371 aa).

ATP is bound by residues 24 to 31 (AMSGGVDS) and leucine 50. The active-site Nucleophile is cysteine 120. An intrachain disulfide couples cysteine 120 to cysteine 216. Glycine 144 lines the ATP pocket. The tract at residues 166–168 (KDQ) is interaction with tRNA. Cysteine 216 serves as the catalytic Cysteine persulfide intermediate.

It belongs to the MnmA/TRMU family.

The protein resides in the cytoplasm. It carries out the reaction S-sulfanyl-L-cysteinyl-[protein] + uridine(34) in tRNA + AH2 + ATP = 2-thiouridine(34) in tRNA + L-cysteinyl-[protein] + A + AMP + diphosphate + H(+). Catalyzes the 2-thiolation of uridine at the wobble position (U34) of tRNA, leading to the formation of s(2)U34. This chain is tRNA-specific 2-thiouridylase MnmA, found in Wolbachia sp. subsp. Brugia malayi (strain TRS).